A 231-amino-acid polypeptide reads, in one-letter code: DNA mismatch repair protein MutH (231 aa).

The protein belongs to the MutH family.

The protein resides in the cytoplasm. Its function is as follows. Sequence-specific endonuclease that cleaves unmethylated GATC sequences. It is involved in DNA mismatch repair. The polypeptide is DNA mismatch repair protein MutH (Pectobacterium atrosepticum (strain SCRI 1043 / ATCC BAA-672) (Erwinia carotovora subsp. atroseptica)).